The following is a 2038-amino-acid chain: Fer-1-like protein 5 (2038 aa).

7 C2 domains span residues 1-100, 145-265, 307-424, 1055-1186, 1225-1345, 1467-1587, and 1705-1853; these read MLRV…MFVR, TQKK…TLLR, QNTR…QGMY, TPED…FTPL, IPCK…SLNY, PKPP…ARCG, and GPPG…KQCS. Residues aspartate 1502, aspartate 1508, aspartate 1557, phenylalanine 1558, aspartate 1559, aspartate 1565, aspartate 1824, serine 1827, and aspartate 1830 each coordinate Ca(2+). A helical membrane pass occupies residues 1961–1981; sequence IICLVVTLVIGFILLNFVYSA.

The protein belongs to the ferlin family. In terms of assembly, interacts (via second C2 domain) with EHD1 and EHD2. Ca(2+) is required as a cofactor. As to expression, expressed in differentiating myoblasts and myotubes.

It is found in the cell membrane. Its subcellular location is the membrane. In terms of biological role, plays a role in myoblast fusion; probable mediator of endocytic recycling for membrane trafficking events during myotube formation. This chain is Fer-1-like protein 5 (Fer1l5), found in Mus musculus (Mouse).